A 356-amino-acid polypeptide reads, in one-letter code: Ferrochelatase (356 aa).

Fe cation contacts are provided by His214 and Glu295.

It belongs to the ferrochelatase family.

The protein localises to the cytoplasm. It catalyses the reaction heme b + 2 H(+) = protoporphyrin IX + Fe(2+). The protein operates within porphyrin-containing compound metabolism; protoheme biosynthesis; protoheme from protoporphyrin-IX: step 1/1. Functionally, catalyzes the ferrous insertion into protoporphyrin IX. This is Ferrochelatase from Paraburkholderia phytofirmans (strain DSM 17436 / LMG 22146 / PsJN) (Burkholderia phytofirmans).